We begin with the raw amino-acid sequence, 501 residues long: Beta-secretase 1 (501 aa).

Positions 1–21 are cleaved as a signal peptide; it reads MAQALPWLLLWMGAGVLPAHG. Residues 22-45 constitute a propeptide that is removed on maturation; sequence TQHGIRLPLRSGLGGAPLGLRLPR. The Extracellular portion of the chain corresponds to 22 to 457; that stretch reads TQHGIRLPLR…PQTDESTLMT (436 aa). The tract at residues 39-58 is disordered; the sequence is LGLRLPRETDEEPEEPGRRG. Residues 75 to 416 form the Peptidase A1 domain; that stretch reads YYVEMTVGSP…DRARKRIGFA (342 aa). The active site involves aspartate 93. An N6-acetyllysine modification is found at lysine 126. 3 N-linked (GlcNAc...) asparagine glycosylation sites follow: asparagine 153, asparagine 172, and asparagine 223. 3 disulfide bridges follow: cysteine 216-cysteine 420, cysteine 278-cysteine 443, and cysteine 330-cysteine 380. Residues lysine 275, lysine 279, and lysine 285 each carry the N6-acetyllysine modification. Residue aspartate 289 is part of the active site. Lysine 299, lysine 300, and lysine 307 each carry N6-acetyllysine. N-linked (GlcNAc...) asparagine glycosylation occurs at asparagine 354. Residues 458-478 form a helical membrane-spanning segment; the sequence is IAYVMAAICALFMLPLCLMVC. Residues cysteine 474, cysteine 478, cysteine 482, and cysteine 485 are each lipidated (S-palmitoyl cysteine). The Cytoplasmic portion of the chain corresponds to 479 to 501; the sequence is QWRCLRCLRQQHDDFADDISLLK. The interaction with RTN3 stretch occupies residues 479 to 501; it reads QWRCLRCLRQQHDDFADDISLLK. The DXXLL motif lies at 496-500; the sequence is DISLL. Position 498 is a phosphoserine (serine 498). Residue lysine 501 forms a Glycyl lysine isopeptide (Lys-Gly) (interchain with G-Cter in ubiquitin) linkage.

This sequence belongs to the peptidase A1 family. In terms of assembly, monomer. Interacts (via DXXLL motif) with GGA1, GGA2 and GGA3 (via their VHS domain); the interaction highly increases when BACE1 is phosphorylated at Ser-498. Interacts with RTN1; RTN2; RTN3 and RTN4; the interaction leads to inhibition of amyloid precursor protein processing. Interacts with SNX6. Interacts with PCSK9. Interacts with NAT8 and NAT8B. Interacts with BIN1. Interacts (via extracellular domain) with ADAM10 (via extracellular domain). Interacts with SORL1; this interaction may affect binding with APP and hence reduce APP cleavage. Interacts with NRDC AND NRG1. Post-translationally, N-Glycosylated. Addition of a bisecting N-acetylglucosamine by MGAT3 blocks lysosomal targeting, further degradation and is required for maintaining stability under stress conditions. In terms of processing, acetylated in the endoplasmic reticulum at Lys-126, Lys-275, Lys-279, Lys-285, Lys-299, Lys-300 and Lys-307. Acetylation by NAT8 and NAT8B is transient and deacetylation probably occurs in the Golgi. Acetylation regulates the maturation, the transport to the plasma membrane, the stability and the expression of the protein. Palmitoylation mediates lipid raft localization. Post-translationally, ubiquitinated at Lys-501, ubiquitination leads to lysosomal degradation. Monoubiquitinated and 'Lys-63'-linked polyubitinated. Deubiquitnated by USP8; inhibits lysosomal degradation. In terms of processing, phosphorylation at Ser-498 is required for interaction with GGA1 and retrograded transport from endosomal compartments to the trans-Golgi network. Non-phosphorylated BACE1 enters a direct recycling route to the cell surface. Expressed at high levels in the brain and pancreas. In the brain, expression is highest in the substantia nigra, locus coruleus and medulla oblongata.

The protein resides in the cell membrane. Its subcellular location is the golgi apparatus. The protein localises to the trans-Golgi network. It is found in the endoplasmic reticulum. It localises to the endosome. The protein resides in the cell surface. Its subcellular location is the cytoplasmic vesicle membrane. The protein localises to the membrane raft. It is found in the lysosome. It localises to the late endosome. The protein resides in the early endosome. Its subcellular location is the recycling endosome. The protein localises to the cell projection. It is found in the axon. It localises to the dendrite. The catalysed reaction is Broad endopeptidase specificity. Cleaves Glu-Val-Asn-Leu-|-Asp-Ala-Glu-Phe in the Swedish variant of Alzheimer's amyloid precursor protein.. With respect to regulation, inhibited by RTN3 and RTN4. Functionally, responsible for the proteolytic processing of the amyloid precursor protein (APP). Cleaves at the N-terminus of the A-beta peptide sequence, between residues 671 and 672 of APP, leads to the generation and extracellular release of beta-cleaved soluble APP, and a corresponding cell-associated C-terminal fragment which is later released by gamma-secretase. Cleaves CHL1. The protein is Beta-secretase 1 of Homo sapiens (Human).